Here is a 238-residue protein sequence, read N- to C-terminus: Probable xyloglucan-specific endo-beta-1,4-glucanase A (238 aa).

The first 18 residues, 1–18, serve as a signal peptide directing secretion; the sequence is MKLSLSVALSLAAATAQA. N-linked (GlcNAc...) asparagine glycans are attached at residues Asn-106 and Asn-171.

Belongs to the glycosyl hydrolase 12 (cellulase H) family.

The protein resides in the secreted. It catalyses the reaction xyloglucan + H2O = xyloglucan oligosaccharides.. Its function is as follows. Catalyzes endohydrolysis of 1,4-beta-D-glucosidic linkages in xyloglucan with retention of the beta-configuration of the glycosyl residues. Specific for xyloglucan and does not hydrolyze other cell wall components. This Aspergillus fumigatus (strain CBS 144.89 / FGSC A1163 / CEA10) (Neosartorya fumigata) protein is Probable xyloglucan-specific endo-beta-1,4-glucanase A (xgeA).